The sequence spans 39 residues: U1-ectatotoxin-Et1b subunit A (39 aa).

A disulfide bridge links Cys-14 with Cys-35.

This sequence belongs to the ectatomin family. Ectatomin-Et subfamily. In terms of assembly, heterodimer of subunits A and B; disulfide-linked. As to expression, expressed by the venom gland.

The protein resides in the secreted. It is found in the target cell membrane. The sequence is that of U1-ectatotoxin-Et1b subunit A from Ectatomma tuberculatum (Selva ant).